Here is a 1118-residue protein sequence, read N- to C-terminus: Sodium-driven chloride bicarbonate exchanger (1118 aa).

2 disordered regions span residues 1–23 (MEIK…EEAV) and 58–97 (GRKS…TPSQ). At 1 to 509 (MEIKDQGAQM…DFRDAFSLQC (509 aa)) the chain is on the cytoplasmic side. Residues 59-76 (RKSHRRHRHRGHKHRKRD) are compositionally biased toward basic residues. Residues 77–90 (RERDSGLEDGRESP) are compositionally biased toward basic and acidic residues. Position 89 is a phosphoserine (serine 89). A Phosphothreonine modification is found at threonine 94. Zn(2+) contacts are provided by histidine 221 and histidine 223. Disordered stretches follow at residues 269–310 (AENK…KGPP) and 457–476 (NGTA…GPEL). Serine 276 bears the Phosphoserine mark. The helical transmembrane segment at 510 to 530 (LASFLFLYCACMSPVITFGGL) threads the bilayer. At 531-538 (LGEATEGR) the chain is on the extracellular side. The chain crosses the membrane as a helical span at residues 539–559 (ISAIESLFGASMTGIAYSLFG). Over 560–562 (GQP) the chain is Cytoplasmic. A helical transmembrane segment spans residues 563–583 (LTILGSTGPVLVFEKILFKFC). Over 584–596 (KEYGLSYLSLRAS) the chain is Extracellular. Residues 597 to 617 (IGLWTATLCIILVATDASSLV) traverse the membrane as a helical segment. The Cytoplasmic segment spans residues 618–626 (CYITRFTEE). Residues 627-647 (AFASLICIIFIYEALEKLFEL) traverse the membrane as a helical segment. Residues 648–720 (SETYPINMHN…VGRACGHGHP (73 aa)) lie on the Extracellular side of the membrane. N-linked (GlcNAc...) asparagine glycans are attached at residues asparagine 677, asparagine 687, and asparagine 697. Residues 721–741 (YVPDVLFWSVILFFSTVTMSA) form a helical membrane-spanning segment. At 742–762 (TLKQFKTSRYFPTKVRSIVSD) the chain is on the cytoplasmic side. A helical membrane pass occupies residues 763–783 (FAVFLTILCMVLIDYAIGIPS). Over 784 to 809 (PKLQVPSVFKPTRDDRGWFVTPLGPN) the chain is Extracellular. A helical membrane pass occupies residues 810–830 (PWWTIIAAIIPALLCTILIFM). Residues 831 to 855 (DQQITAVIINRKEHKLKKGCGYHLD) lie on the Cytoplasmic side of the membrane. Residues 856 to 876 (LLMVAVMLGVCSIMGLPWFVA) traverse the membrane as a helical segment. The Extracellular portion of the chain corresponds to 877–912 (ATVLSITHVNSLKLESECSAPGEQPKFLGIREQRVT). Residues 913–933 (GLMIFILMGSSVFMTSILKFI) form a helical membrane-spanning segment. Topologically, residues 934–935 (PM) are cytoplasmic. Residues 936–956 (PVLYGVFLYMGASSLKGIQLF) traverse the membrane as a helical segment. Residues 957 to 998 (DRIKLFWMPAKHQPDFIYLRHVPLRKVHLFTVIQMSCLGLLW) are Extracellular-facing. A helical membrane pass occupies residues 999 to 1019 (IIKVSRAAIVFPMMVLALVFV). At 1020–1118 (RKLMDFLFTK…SRFPSKSSPS (99 aa)) the chain is on the cytoplasmic side. A phosphoserine mark is found at serine 1057 and serine 1085.

Belongs to the anion exchanger (TC 2.A.31) family. N-glycosylated. As to expression, in the brain, detected in cerebral cortex, subcortex, cerebellum, hippocampus and medulla (at protein level). In the cerebrum, expressed at high levels throughout the cortex, at lower levels in striatum and not detectable in the corpus callosum (at protein level). In the cerebellum, detected at high levels in the molecular layer but at very low levels in the granular layer (at protein level). In the central nervous system, detected in neurons in the olfactory bulb, cortex and cerebellum (at protein level). Within the hippocampus, abundantly expressed in CA3 pyramidal cells (at protein level). Strongly expressed in the retina with high levels in bipolar and amacrine cells (at protein level). Expressed in the epithelial cells of the choroid plexus. During embryonic development, expressed in neurons of the central nervous system. Also expressed in the peripheral nervous system and in non-neuronal tissues such as the dura and some epithelia including the acid-secreting epithelium of the stomach and the duodenal epithelium. In the embryonic retina, expression is restricted to the neuronal cell layer and the retinal pigment epithelium. Expressed at high levels in brain and at low levels in the pituitary, testis, kidney and ileum. Also expressed in pancreatic islets.

The protein localises to the basolateral cell membrane. It localises to the apical cell membrane. Its subcellular location is the cell projection. The protein resides in the dendrite. It is found in the axon. The protein localises to the perikaryon. It localises to the presynapse. Its subcellular location is the postsynapse. It catalyses the reaction 2 hydrogencarbonate(out) + chloride(in) + Na(+)(out) = 2 hydrogencarbonate(in) + chloride(out) + Na(+)(in). Its activity is regulated as follows. Zinc-binding negatively regulates its activity. In terms of biological role, sodium/bicarbonate cotransporter which plays an important role in regulating intracellular pH. Has been shown to act as a sodium/bicarbonate cotransporter in exchange for intracellular chloride. Has also been shown to act as a sodium/biocarbonate cotransporter which is not responsible for net efflux of chloride, with the observed chloride efflux being due to chloride self-exchange. Controls neuronal pH and may contribute to the secretion of cerebrospinal fluid. Acting on presynaptic intracellular pH, it promotes GABA release, reduces the excitability of CA1 pyramidal neurons, and modulates short-term synaptic plasticity. Required in retinal cells to maintain normal pH which is necessary for normal vision. In the kidney, likely to mediate bicarbonate reclamation in the apical membrane of the proximal tubules. Its function is as follows. Sodium/bicarbonate cotransporter which mediates cotransport of sodium and bicarbonate in association with an efflux of intracellular chloride. In Mus musculus (Mouse), this protein is Sodium-driven chloride bicarbonate exchanger.